Here is a 374-residue protein sequence, read N- to C-terminus: Lipoyl synthase, mitochondrial (374 aa).

Residues 1-19 constitute a mitochondrion transit peptide; that stretch reads MHSRSALLYRFLRPASRCF. Positions 103, 108, 114, 134, 138, 141, and 350 each coordinate [4Fe-4S] cluster. Residues 119-339 form the Radical SAM core domain; sequence ETGTATATIM…RLLGMEMGFR (221 aa).

It belongs to the radical SAM superfamily. Lipoyl synthase family. Requires [4Fe-4S] cluster as cofactor. As to expression, expressed in leaves and flowers, but not in roots. Expressed in roots, rosette leaves, cauline leaves, stems, flowers and siliques.

The protein resides in the mitochondrion. The catalysed reaction is [[Fe-S] cluster scaffold protein carrying a second [4Fe-4S](2+) cluster] + N(6)-octanoyl-L-lysyl-[protein] + 2 oxidized [2Fe-2S]-[ferredoxin] + 2 S-adenosyl-L-methionine + 4 H(+) = [[Fe-S] cluster scaffold protein] + N(6)-[(R)-dihydrolipoyl]-L-lysyl-[protein] + 4 Fe(3+) + 2 hydrogen sulfide + 2 5'-deoxyadenosine + 2 L-methionine + 2 reduced [2Fe-2S]-[ferredoxin]. It functions in the pathway protein modification; protein lipoylation via endogenous pathway; protein N(6)-(lipoyl)lysine from octanoyl-[acyl-carrier-protein]: step 2/2. Catalyzes the radical-mediated insertion of two sulfur atoms into the C-6 and C-8 positions of the octanoyl moiety bound to the lipoyl domains of lipoate-dependent enzymes, thereby converting the octanoylated domains into lipoylated derivatives. Together with LIP2 is essential for mitochondrial protein lipoylation during seed development. Required for the lipoylation of mitochondrial pyruvate dehydrogenase component E2 proteins in leaves and roots. The chain is Lipoyl synthase, mitochondrial from Arabidopsis thaliana (Mouse-ear cress).